Here is a 357-residue protein sequence, read N- to C-terminus: Sorbitol dehydrogenase 2 (357 aa).

Cysteine 43 is a Zn(2+) binding site. Tyrosine 49 is a substrate binding site. Zn(2+)-binding residues include histidine 68 and glutamate 69. Glutamate 154 serves as a coordination point for substrate. Residues aspartate 202, lysine 207, 275-277 (VGM), and 299-301 (CFR) contribute to the NAD(+) site. Substrate-binding residues include arginine 301 and tyrosine 302.

It belongs to the zinc-containing alcohol dehydrogenase family. As to quaternary structure, homotetramer. The cofactor is Zn(2+).

It carries out the reaction keto-D-fructose + NADH + H(+) = D-sorbitol + NAD(+). It catalyses the reaction xylitol + NAD(+) = D-xylulose + NADH + H(+). Functionally, polyol dehydrogenase that catalyzes the reversible NAD(+)-dependent oxidation of various sugar alcohols. Is active with D-sorbitol (D-glucitol) and xylitol as substrates, leading to the C2-oxidized product D-fructose and D-xylulose, respectively. This chain is Sorbitol dehydrogenase 2 (SOR2), found in Saccharomyces cerevisiae (strain ATCC 204508 / S288c) (Baker's yeast).